The sequence spans 261 residues: Hemin import ATP-binding protein HmuV (261 aa).

The 237-residue stretch at 5–241 (LTANAASFAI…DLLARVFDVD (237 aa)) folds into the ABC transporter domain. ATP is bound at residue 37-44 (GPNGAGKS).

Belongs to the ABC transporter superfamily. Heme (hemin) importer (TC 3.A.1.14.5) family. In terms of assembly, the complex is composed of two ATP-binding proteins (HmuV), two transmembrane proteins (HmuU) and a solute-binding protein (HmuT).

The protein resides in the cell inner membrane. Part of the ABC transporter complex HmuTUV involved in hemin import. Responsible for energy coupling to the transport system. The chain is Hemin import ATP-binding protein HmuV from Rhodopseudomonas palustris (strain BisB5).